The sequence spans 246 residues: Envelope glycoprotein L (246 aa).

An N-terminal signal peptide occupies residues 1–19 (MKTNIFFIFLISILNQIYA). Positions 29 to 235 (LEQECIKNIL…EKYNEVLPFR (207 aa)) constitute a gL betaherpesvirus-type domain. Cys-134 and Cys-139 form a disulfide bridge.

Belongs to the herpesviridae glycoprotein L (gL) family. Betaherpesvirinae gL subfamily. Interacts with glycoprotein H (gH); this interaction is necessary for the correct processing and cell surface expression of gH.

It is found in the virion membrane. The protein resides in the host cell membrane. Its subcellular location is the host Golgi apparatus. It localises to the host trans-Golgi network. In terms of biological role, the heterodimer glycoprotein H-glycoprotein L is required for the fusion of viral and plasma membranes leading to virus entry into the host cell. Acts as a functional inhibitor of gH and maintains gH in an inhibited form. Upon binding to host integrins, gL dissociates from gH leading to activation of the viral fusion glycoproteins gB and gH. The polypeptide is Envelope glycoprotein L (Homo sapiens (Human)).